A 255-amino-acid polypeptide reads, in one-letter code: GTP cyclohydrolase III (255 aa).

It belongs to the archaeal-type GTP cyclohydrolase family.

It carries out the reaction GTP + 3 H2O = 2-amino-5-formylamino-6-(5-phospho-D-ribosylamino)pyrimidin-4(3H)-one + 2 phosphate + 2 H(+). Catalyzes the formation of 2-amino-5-formylamino-6-ribofuranosylamino-4(3H)-pyrimidinone ribonucleotide monophosphate and inorganic phosphate from GTP. Also has an independent pyrophosphate phosphohydrolase activity. In Methanosphaera stadtmanae (strain ATCC 43021 / DSM 3091 / JCM 11832 / MCB-3), this protein is GTP cyclohydrolase III.